The sequence spans 479 residues: Phosphoglycerate kinase, glycosomal (479 aa).

(2R)-3-phosphoglycerate contacts are provided by valine 23, aspartate 24, phenylalanine 25, asparagine 26, arginine 39, serine 61, histidine 62, glycine 64, arginine 65, arginine 132, histidine 168, and arginine 169. Positions 214 and 215 each coordinate ADP. Glycine 214 contributes to the CDP binding site. Residues alanine 215 and lysine 216 each coordinate AMP. Alanine 215 provides a ligand contact to ATP. Alanine 215 provides a ligand contact to Mg(2+). Lysine 216 contributes to the (2R)-3-phosphoglycerate binding site. CDP is bound at residue aspartate 219. Aspartate 219 lines the Mg(2+) pocket. ADP contacts are provided by lysine 220 and glycine 238. Lysine 220 is an AMP binding site. ATP is bound at residue lysine 220. Glycine 238 contributes to the CDP binding site. Positions 239 and 311 each coordinate AMP. ATP is bound by residues alanine 239 and alanine 311. Positions 311 and 335 each coordinate ADP. 2 residues coordinate CDP: glycine 336 and phenylalanine 341. 4 residues coordinate ADP: phenylalanine 341, glutamate 342, aspartate 374, and threonine 375. Glutamate 342 provides a ligand contact to AMP. Glutamate 342, aspartate 374, and threonine 375 together coordinate ATP. Aspartate 374 contributes to the Mg(2+) binding site.

The protein belongs to the phosphoglycerate kinase family. As to quaternary structure, monomer. Requires Mg(2+) as cofactor.

The protein localises to the glycosome. The catalysed reaction is (2R)-3-phosphoglycerate + ATP = (2R)-3-phospho-glyceroyl phosphate + ADP. The protein operates within carbohydrate degradation; glycolysis; pyruvate from D-glyceraldehyde 3-phosphate: step 2/5. The chain is Phosphoglycerate kinase, glycosomal (PGKC) from Leishmania mexicana.